Here is a 77-residue protein sequence, read N- to C-terminus: Large ribosomal subunit protein bL28 (77 aa).

The protein belongs to the bacterial ribosomal protein bL28 family.

In Cupriavidus necator (strain ATCC 17699 / DSM 428 / KCTC 22496 / NCIMB 10442 / H16 / Stanier 337) (Ralstonia eutropha), this protein is Large ribosomal subunit protein bL28.